Consider the following 328-residue polypeptide: DNA-directed RNA polymerase subunit alpha (328 aa).

The interval 1–232 (MHNSLAELIK…QHLAILVDLK (232 aa)) is alpha N-terminal domain (alpha-NTD). The interval 246-328 (FDPLLLHPVD…PPEGLKKLNQ (83 aa)) is alpha C-terminal domain (alpha-CTD).

This sequence belongs to the RNA polymerase alpha chain family. In terms of assembly, homodimer. The RNAP catalytic core consists of 2 alpha, 1 beta, 1 beta' and 1 omega subunit. When a sigma factor is associated with the core the holoenzyme is formed, which can initiate transcription.

The enzyme catalyses RNA(n) + a ribonucleoside 5'-triphosphate = RNA(n+1) + diphosphate. Its function is as follows. DNA-dependent RNA polymerase catalyzes the transcription of DNA into RNA using the four ribonucleoside triphosphates as substrates. The polypeptide is DNA-directed RNA polymerase subunit alpha (Methylococcus capsulatus (strain ATCC 33009 / NCIMB 11132 / Bath)).